We begin with the raw amino-acid sequence, 397 residues long: Subtilisin-like protease 12 (397 aa).

An N-terminal signal peptide occupies residues 1–19 (MSIFKMMLIYFAILWVVNA). A propeptide spanning residues 20-116 (AQLLDIDPQG…VEPNKEMQVA (97 aa)) is cleaved from the precursor. The Inhibitor I9 domain occupies 35 to 115 (YIVVMKDRVS…FVEPNKEMQV (81 aa)). N-linked (GlcNAc...) asparagine glycosylation is found at asparagine 123, asparagine 136, and asparagine 150. Positions 125–397 (TWGLSRISHK…NKLLYNGSGA (273 aa)) constitute a Peptidase S8 domain. Residues aspartate 157 and histidine 188 each act as charge relay system in the active site. N-linked (GlcNAc...) asparagine glycans are attached at residues asparagine 249, asparagine 305, and asparagine 334. Serine 343 serves as the catalytic Charge relay system. Asparagine 385 and asparagine 393 each carry an N-linked (GlcNAc...) asparagine glycan.

This sequence belongs to the peptidase S8 family.

It is found in the secreted. Secreted subtilisin-like serine protease with keratinolytic activity that contributes to pathogenicity. The sequence is that of Subtilisin-like protease 12 (SUB12) from Trichophyton verrucosum (strain HKI 0517).